The primary structure comprises 338 residues: Protein UL141 (338 aa).

An N-terminal signal peptide occupies residues 1 to 25; that stretch reads MCRRESLRTLPWLFWVLLSCPRLLE. Residues 37–278 lie on the Extracellular side of the membrane; the sequence is DIAEKMWAEN…DTGMSPWATR (242 aa). Residues Asn117, Asn132, and Asn147 are each glycosylated (N-linked (GlcNAc...) asparagine; by host). The helical transmembrane segment at 279–299 threads the bilayer; that stretch reads GIAAFLGFWSIFTVCFLCYLC. Residues 300-338 are Cytoplasmic-facing; that stretch reads YLQCCGHWCPTPGRGRRGGEGYRRLPTYDSYPGVKKMKR.

Interacts with human PVR. Interacts with human TNFRSF10A and TNFRSF10B. Forms a homodimer that engages two TNFRSF10B monomers.

Its subcellular location is the host endoplasmic reticulum membrane. Functionally, evasion of NK cell killing. Blocks surface expression of PVR which is a ligand for NK cell-activating receptors. Binds human PVR in the endoplasmic reticulum and prevents its maturation and transport to the cell surface. Targets also the natural killer cell activating ligand NECTIN2 for proteasome-mediated degradation. Additionally promotes intracellular retention of TNFRSF10A/TRAIL-R1 and TNFRSF10B/TRAIL-R2 and thus down-regulates their cell surface expression. The polypeptide is Protein UL141 (UL141) (Human cytomegalovirus (strain Merlin) (HHV-5)).